We begin with the raw amino-acid sequence, 530 residues long: Protein transport protein SEC9 (530 aa).

Residues 1–274 (MGIKKMFQKK…QPANDYNLDL (274 aa)) form a disordered region. Over residues 8–22 (QKKEPTEQEIREELS) the composition is skewed to basic and acidic residues. 2 stretches are compositionally biased toward low complexity: residues 61–100 (NPYANINPGTNNNNNNPYANDNGNNSTGNPNNNSNSNNGG) and 122–141 (GSSPSPYAPTTSTTTRSSNP). Residues 142–160 (YGNNNGSRSSQNTSSPYAK) are compositionally biased toward polar residues. Over residues 161–202 (STNNSSYSNSPYSGSTVNNGNRGGHSNNSNSSAGGNPYAAGG) the composition is skewed to low complexity. 2 stretches are compositionally biased toward polar residues: residues 203–228 (RSSQSQNSRDNVYTAPATRTSTRQTQ) and 258–268 (RNQQSSQQPAN). T-SNARE coiled-coil homology domains lie at 313 to 375 (KFVK…VKEL) and 467 to 529 (DDME…LNNI).

It belongs to the SNAP-25 family.

It localises to the membrane. Functionally, late secretory t-SNARE protein required for secretion and proper cytokinesis. Plays an important role in the secretion of virulence-associated extracellular enzymes and vesicle-mediated polarized hyphal growth. In Candida albicans (strain SC5314 / ATCC MYA-2876) (Yeast), this protein is Protein transport protein SEC9 (SEC9).